Here is a 436-residue protein sequence, read N- to C-terminus: MTSTLHSTSFNTTRSKQVFARAQSLMPGGVSSPVRAFKSVGGDPVVFDRVSGAYAWDVDGNQYIDYIGSWGPAIVGHAHPEVIEALRRALEKGTSFGAPCVLENELAERVIEAVPSVEMVRFVNSGTEACMAVLRLMRAYTGREKVIKFEGCYHGHADMFLVKAGSGVATLGLPDSPGVPKAATSATLTAPYNDLEAVKALFEQHPDSIAGVILEPVVGNAGFIPPQPGFLEGLRDLTQKYGALLVFDEVMTGFRISYGGVQAKFGVIPDLTTLGKVIGGGLPVGAYGGRREIMEMVAPAGPMYQAGTLSGNPLAMTAGIQTLDILRRPGTYEYLERITEKLATGLLQIARETGHEMCGGYLPGMFGFFFTAGPVRNYEEAKTSDLQKFARFHRGMLERGVYLAPSQFEAGFTSLAHTEADVEKTLAAAREVLSTL.

An N6-(pyridoxal phosphate)lysine modification is found at lysine 276.

This sequence belongs to the class-III pyridoxal-phosphate-dependent aminotransferase family. HemL subfamily. Homodimer. Requires pyridoxal 5'-phosphate as cofactor.

The protein localises to the cytoplasm. It carries out the reaction (S)-4-amino-5-oxopentanoate = 5-aminolevulinate. Its pathway is porphyrin-containing compound metabolism; protoporphyrin-IX biosynthesis; 5-aminolevulinate from L-glutamyl-tRNA(Glu): step 2/2. The protein operates within porphyrin-containing compound metabolism; chlorophyll biosynthesis. The chain is Glutamate-1-semialdehyde 2,1-aminomutase from Synechococcus sp. (strain JA-2-3B'a(2-13)) (Cyanobacteria bacterium Yellowstone B-Prime).